A 376-amino-acid polypeptide reads, in one-letter code: Protein-tyrosine sulfotransferase 2 (376 aa).

Over 1-8 (MRLSVRKV) the chain is Cytoplasmic. Residues 9 to 25 (LLAVGCALALVLAVQLG) traverse the membrane as a helical; Signal-anchor for type II membrane protein segment. Over 26 to 376 (QQVLECRAVL…NSTSPHLGSS (351 aa)) the chain is Lumenal. Position 77 to 81 (77 to 81 (RSGTT)) interacts with 3'-phosphoadenylyl sulfate. The cysteines at positions 95 and 155 are disulfide-linked. The active-site Proton donor/acceptor is the Glu-98. The interaction with peptide substrate stretch occupies residues 100–104 (RIIPR). Residues Arg-182, Ser-190, and Arg-194 each contribute to the 3'-phosphoadenylyl sulfate site. Residues Cys-224 and Cys-232 are joined by a disulfide bond. 3'-phosphoadenylyl sulfate contacts are provided by residues Tyr-237, 284–293 (STDQVIKPVN), and Lys-299. N-linked (GlcNAc...) asparagine glycosylation is found at Asn-342 and Asn-367.

The protein belongs to the protein sulfotransferase family. Homodimer. Can also form heterodimers with TPST1. N-glycosylated.

It localises to the golgi apparatus membrane. It catalyses the reaction L-tyrosyl-[protein] + 3'-phosphoadenylyl sulfate = O-sulfo-L-tyrosine-[protein] + adenosine 3',5'-bisphosphate + H(+). Functionally, catalyzes the O-sulfation of tyrosine residues within acidic motifs of polypeptides, using 3'-phosphoadenylyl sulfate (PAPS) as cosubstrate. In Rattus norvegicus (Rat), this protein is Protein-tyrosine sulfotransferase 2 (Tpst2).